Reading from the N-terminus, the 1071-residue chain is DNA-directed RNA polymerase subunit beta (1071 aa).

This sequence belongs to the RNA polymerase beta chain family. In plastids the minimal PEP RNA polymerase catalytic core is composed of four subunits: alpha, beta, beta', and beta''. When a (nuclear-encoded) sigma factor is associated with the core the holoenzyme is formed, which can initiate transcription.

It is found in the plastid. Its subcellular location is the chloroplast. It catalyses the reaction RNA(n) + a ribonucleoside 5'-triphosphate = RNA(n+1) + diphosphate. In terms of biological role, DNA-dependent RNA polymerase catalyzes the transcription of DNA into RNA using the four ribonucleoside triphosphates as substrates. This Anthoceros angustus (Hornwort) protein is DNA-directed RNA polymerase subunit beta.